We begin with the raw amino-acid sequence, 207 residues long: Venom allergen 5 (207 aa).

4 disulfides stabilise this stretch: Cys-4–Cys-16, Cys-8–Cys-105, Cys-29–Cys-97, and Cys-173–Cys-190. Positions 48 to 192 constitute an SCP domain; sequence VDEHNRFRQK…MKSHYLVCNY (145 aa).

This sequence belongs to the CRISP family. Venom allergen 5-like subfamily. Monomer. Expressed by the venom gland.

It is found in the secreted. The sequence is that of Venom allergen 5 from Polybia scutellaris rioplatensis (Camoati).